A 148-amino-acid chain; its full sequence is MKVELKILNKELIKELPGYATEGSAAIDLRACISESIYLKSGECKLIATGIAINIANPNYAAMILPRSGLGHKKGLVLGNGTGLIDSDYQGELMVSCFNRSQETIEIEPLMRFAQLVIVPVVQANFEIVEDFSQQSVRATGGFGHTGV.

Residues R67–G69, N80, L84–D86, and M94 contribute to the substrate site.

This sequence belongs to the dUTPase family. The cofactor is Mg(2+).

The enzyme catalyses dUTP + H2O = dUMP + diphosphate + H(+). The protein operates within pyrimidine metabolism; dUMP biosynthesis; dUMP from dCTP (dUTP route): step 2/2. This enzyme is involved in nucleotide metabolism: it produces dUMP, the immediate precursor of thymidine nucleotides and it decreases the intracellular concentration of dUTP so that uracil cannot be incorporated into DNA. In Francisella tularensis subsp. holarctica (strain FTNF002-00 / FTA), this protein is Deoxyuridine 5'-triphosphate nucleotidohydrolase.